The chain runs to 1372 residues: DNA-directed RNA polymerase subunit beta (1372 aa).

Belongs to the RNA polymerase beta chain family. The RNAP catalytic core consists of 2 alpha, 1 beta, 1 beta' and 1 omega subunit. When a sigma factor is associated with the core the holoenzyme is formed, which can initiate transcription.

The catalysed reaction is RNA(n) + a ribonucleoside 5'-triphosphate = RNA(n+1) + diphosphate. Its function is as follows. DNA-dependent RNA polymerase catalyzes the transcription of DNA into RNA using the four ribonucleoside triphosphates as substrates. This Bradyrhizobium diazoefficiens (strain JCM 10833 / BCRC 13528 / IAM 13628 / NBRC 14792 / USDA 110) protein is DNA-directed RNA polymerase subunit beta.